The following is a 676-amino-acid chain: Envelope fusion protein (676 aa).

The first 16 residues, 1-16, serve as a signal peptide directing secretion; sequence MSPLALIVLLAWHATA. N76 and N87 each carry an N-linked (GlcNAc...) asparagine; by host glycan. A coiled-coil region spans residues 169 to 215; the sequence is ARELHDLAKTSNALNEQIKEVTDELVNIAKFEEHKQCLERQRDDLCG. N-linked (GlcNAc...) asparagine; by host glycosylation is found at N266, N469, N505, and N548. A helical membrane pass occupies residues 577–597; sequence CATAEAVVACVVLFLVALLLF. The N-linked (GlcNAc...) asparagine; by host glycan is linked to N628.

N-glycosylated.

It localises to the virion membrane. The protein localises to the host cell membrane. Its function is as follows. Envelope glycoprotein which mediates the fusion of viral and host endosomal membranes leading to virus entry into the host cell. The sequence is that of Envelope fusion protein from Lepidoptera (butterflies and moths).